We begin with the raw amino-acid sequence, 2058 residues long: Unconventional myosin-X (2058 aa).

Met1 carries the post-translational modification N-acetylmethionine. The region spanning Glu63–Glu739 is the Myosin motor domain. ATP is bound by residues Asn104, Tyr113, Gly160 to Glu165, and Asn215. Residues Leu619–Met641 are actin-binding. IQ domains follow at residues Val742–Arg763, Lys764–His787, and Leu788–Glu817. An SAH region spans residues Glu814–Glu883. Disordered stretches follow at residues Glu819–Glu840 and Glu847–Gln866. Positions Glu847–Glu861 are enriched in basic and acidic residues. A coiled-coil region spans residues Asn884 to Ala934. A phosphoserine mark is found at Ser962, Ser965, and Ser968. The disordered stretch occupies residues Gly964–Asp1090. Over residues Pro989–Ala1003 the composition is skewed to acidic residues. The segment covering Val1040 to Ser1049 has biased composition (polar residues). The span at Ser1060–Ser1071 shows a compositional bias: low complexity. The residue at position 1158 (Thr1158) is a Phosphothreonine. PH domains follow at residues Glu1212–Ala1310 and Glu1392–Asp1497. Residues Leu1547–Ile1695 enclose the MyTH4 domain. The 345-residue stretch at Met1700–Arg2044 folds into the FERM domain.

This sequence belongs to the TRAFAC class myosin-kinesin ATPase superfamily. Myosin family. In terms of assembly, monomer, when in an inactive conformation in the cytosol. Homodimer in its active, membrane-bound conformation; antiparallel coiled coil-mediated dimer formation. Interacts strongly with CALM3 and weakly with CALM, the CALM3 interaction is essential for function in filopodial extension and motility. Interacts with ECPAS. Interacts with NEO1. Interacts with ITGB1 and ITGB3. Interacts with VASP. Interacts with DCC and ITGB5; the presence of DCC inhibits ITGB5 binding. Interacts with tubulin; ITGB5 or DCC binding inhibits tubulin binding. The initiator methionine for isoform Headless is removed. As to expression, ubiquitous.

It is found in the cytoplasm. It localises to the cytosol. The protein localises to the cell projection. The protein resides in the lamellipodium. Its subcellular location is the ruffle. It is found in the cytoskeleton. It localises to the filopodium tip. The protein localises to the cell cortex. The protein resides in the filopodium membrane. In terms of biological role, myosins are actin-based motor molecules with ATPase activity. Unconventional myosins serve in intracellular movements. MYO10 binds to actin filaments and actin bundles and functions as a plus end-directed motor. Moves with higher velocity and takes larger steps on actin bundles than on single actin filaments. The tail domain binds to membranous compartments containing phosphatidylinositol 3,4,5-trisphosphate or integrins, and mediates cargo transport along actin filaments. Regulates cell shape, cell spreading and cell adhesion. Stimulates the formation and elongation of filopodia. In hippocampal neurons it induces the formation of dendritic filopodia by trafficking the actin-remodeling protein VASP to the tips of filopodia, where it promotes actin elongation. Plays a role in formation of the podosome belt in osteoclasts. Functionally, functions as a dominant-negative regulator of isoform 1, suppressing its filopodia-inducing and axon outgrowth-promoting activities. In hippocampal neurons, it increases VASP retention in spine heads to induce spine formation and spine head expansion. In Homo sapiens (Human), this protein is Unconventional myosin-X (MYO10).